Consider the following 320-residue polypeptide: MSSPESALPPALLLLGPTASGKTASALALAATLPVEIISVDSALVYRDMDIGTAKPSAAEQAVCPHHLIDVVSPEEAYSAARFCAEASVLMRDISARGRIPLLAGGTMLYFKALRDGLSDLPPADPVLRRAIEERAAAAGWPALHAELARLDPDAAARLEPTDAQRIQRALEIVTLSGAPLAASYARREDAPLPCRLLPIALAPSDRAVLHARIEQRFDQMLAAGLVDEVAALRERYVLQPQMASMRCVGYRQAWEFLDGEIDRATLRFKGIAATRQLAKRQLTWQRQFRDQWPELVELDCLAPDLPQHVRDTALRLLGA.

16–23 (GPTASGKT) serves as a coordination point for ATP. Position 18 to 23 (18 to 23 (TASGKT)) interacts with substrate. Interaction with substrate tRNA regions lie at residues 41-44 (DSAL), 165-169 (QRIQR), and 247-252 (RCVGYR).

The protein belongs to the IPP transferase family. Monomer. It depends on Mg(2+) as a cofactor.

It carries out the reaction adenosine(37) in tRNA + dimethylallyl diphosphate = N(6)-dimethylallyladenosine(37) in tRNA + diphosphate. Its function is as follows. Catalyzes the transfer of a dimethylallyl group onto the adenine at position 37 in tRNAs that read codons beginning with uridine, leading to the formation of N6-(dimethylallyl)adenosine (i(6)A). This chain is tRNA dimethylallyltransferase, found in Azoarcus sp. (strain BH72).